The primary structure comprises 124 residues: Fluoride-specific ion channel FluC 1 (124 aa).

The next 4 membrane-spanning stretches (helical) occupy residues 4-24 (VLIGVAGAAGAVARLLVGAWI), 36-56 (GTFAVNIAGSLLLGLLTGLVV), 67-87 (VVLGAGFLGAFTTFSTWLLDL), and 103-123 (AALSTGLGLLAAWLGLALGWG). Gly75 and Thr78 together coordinate Na(+).

This sequence belongs to the fluoride channel Fluc/FEX (TC 1.A.43) family.

It localises to the cell membrane. It carries out the reaction fluoride(in) = fluoride(out). With respect to regulation, na(+) is not transported, but it plays an essential structural role and its presence is essential for fluoride channel function. In terms of biological role, fluoride-specific ion channel. Important for reducing fluoride concentration in the cell, thus reducing its toxicity. The polypeptide is Fluoride-specific ion channel FluC 1 (Symbiobacterium thermophilum (strain DSM 24528 / JCM 14929 / IAM 14863 / T)).